We begin with the raw amino-acid sequence, 169 residues long: Diuretic hormone 44 (169 aa).

The first 18 residues, 1-18 (MILLGILASTTIIGLTSS), serve as a signal peptide directing secretion. Residues 19–96 (APLSSYERRD…ARRKQERDQR (78 aa)) constitute a propeptide that is removed on maturation. A coiled-coil region spans residues 83–108 (MLELARRKQERDQRQIEENRRFLENI). Pyrrolidone carboxylic acid is present on glutamine 97. Residue isoleucine 108 is modified to Isoleucine amide. Residues 109–169 (GKRSVPVSDA…RVQANELRLL (61 aa)) constitute a propeptide that is removed on maturation.

Residues Ile-66 to Gly-109 may constitute another form of the DH44 peptide, which has not been detected yet. As to expression, expressed in brain, ventral ganglia and the retrocerebral complex (at protein level).

The protein resides in the secreted. In terms of biological role, regulation of fluid secretion. This chain is Diuretic hormone 44, found in Camponotus floridanus (Florida carpenter ant).